The primary structure comprises 69 residues: MFGLGGQELVLILLIVLLLFGAQKLPELAKGLGKGMKEFKRAQNEIEEEFNKSMDDNPKKEKATTASKS.

A helical membrane pass occupies residues 1–21 (MFGLGGQELVLILLIVLLLFG). Residues 47–63 (EEEFNKSMDDNPKKEKA) show a composition bias toward basic and acidic residues. Residues 47 to 69 (EEEFNKSMDDNPKKEKATTASKS) form a disordered region.

The protein belongs to the TatA/E family. In terms of assembly, forms a complex with TatC.

The protein localises to the cell inner membrane. Functionally, part of the twin-arginine translocation (Tat) system that transports large folded proteins containing a characteristic twin-arginine motif in their signal peptide across membranes. TatA could form the protein-conducting channel of the Tat system. This is Sec-independent protein translocase protein TatA from Chlorobium chlorochromatii (strain CaD3).